Here is a 438-residue protein sequence, read N- to C-terminus: Transcriptional regulator Mb0495 (438 aa).

Positions 1 to 12 are enriched in polar residues; that stretch reads MYSTNRTSQSLS. The disordered stretch occupies residues 1 to 22; that stretch reads MYSTNRTSQSLSRKPGRKHQLR. Positions 52 to 73 form a DNA-binding region, H-T-H motif; it reads VGRDVIAGSTSLSIATVNRQVI.

Belongs to the ROK (NagC/XylR) family.

Its function is as follows. Positively regulates the expression of PE13 and PPE18. This is Transcriptional regulator Mb0495 from Mycobacterium bovis (strain ATCC BAA-935 / AF2122/97).